Reading from the N-terminus, the 608-residue chain is Chaperone protein HtpG (608 aa).

The segment at 1–332 is a; substrate-binding; sequence MQFQTEVNQL…VEDLPLNVSR (332 aa). A b region spans residues 333 to 536; sequence EILQENQILK…KNKPDFAMQQ (204 aa). The segment at 537-608 is c; it reads LLKQMGQEQN…LTKIINKAFS (72 aa).

It belongs to the heat shock protein 90 family. In terms of assembly, homodimer.

Its subcellular location is the cytoplasm. Its function is as follows. Molecular chaperone. Has ATPase activity. In Campylobacter jejuni subsp. jejuni serotype O:23/36 (strain 81-176), this protein is Chaperone protein HtpG.